Here is a 250-residue protein sequence, read N- to C-terminus: Ribonuclease HII (250 aa).

Residues 66 to 250 (QLVAGVDEVG…SFAPVSEYEK (185 aa)) form the RNase H type-2 domain. Residues Asp-72, Glu-73, and Asp-164 each coordinate a divalent metal cation.

It belongs to the RNase HII family. Mn(2+) is required as a cofactor. The cofactor is Mg(2+).

It is found in the cytoplasm. The enzyme catalyses Endonucleolytic cleavage to 5'-phosphomonoester.. Its function is as follows. Endonuclease that specifically degrades the RNA of RNA-DNA hybrids. The protein is Ribonuclease HII of Lactobacillus gasseri (strain ATCC 33323 / DSM 20243 / BCRC 14619 / CIP 102991 / JCM 1131 / KCTC 3163 / NCIMB 11718 / NCTC 13722 / AM63).